The primary structure comprises 510 residues: MGEKQLTKEEIKARKMEAKKEAEFNALVKERMQKLENLQEQGKDPFDVYKVERTHTSQQVKDNYDELEGKNVTVAGRLMSKRVHGKAGFSDIRDRYGKIQLYIKINDVGEEKLKEYKTFDIGDFVSITGTVFKTKTGEITLHILDFQLLSKSLKPLPEKFHGLKDPDLRYRQRYVDLIMNEDVKETFMKRTAIIKAIREFLDNRDFLEVETPILSPIAGGAAARPFITHHNALDIDMYLRIATELYLKRLIVGGFEKVYEIGKNFRNEGIDVRHNPEFTAIELYEAYADYNDMMEITENMVAYVCEKVNGTTKVMYEGTEIDFKPPWRRITMVDAVKEYAGVDFNEVKTDEEAREIAKSKELELKKELKDCTKGDILVALFEEFGEEKLMQPTFVCDYPKENSPLTKKKRGNDELTERFEGFVYGREICNAYSELNDPIVQKERFMQQLKERELGDDEAYMMDDDFINALEIGMPPTGGLGIGIDRLIMFLTDSSSIRDVILFPTMKPTK.

Positions 420 and 427 each coordinate Mg(2+).

It belongs to the class-II aminoacyl-tRNA synthetase family. In terms of assembly, homodimer. Mg(2+) serves as cofactor.

The protein localises to the cytoplasm. It catalyses the reaction tRNA(Lys) + L-lysine + ATP = L-lysyl-tRNA(Lys) + AMP + diphosphate. This chain is Lysine--tRNA ligase, found in Clostridium novyi (strain NT).